A 274-amino-acid chain; its full sequence is Probable ribosomal RNA small subunit methyltransferase A (274 aa).

The S-adenosyl-L-methionine site is built by histidine 22, leucine 24, glycine 50, glutamate 71, aspartate 99, and asparagine 114.

The protein belongs to the class I-like SAM-binding methyltransferase superfamily. rRNA adenine N(6)-methyltransferase family. RsmA subfamily.

The protein resides in the cytoplasm. Its function is as follows. Specifically dimethylates two adjacent adenosines in the loop of a conserved hairpin near the 3'-end of 16S rRNA in the 30S particle. May play a critical role in biogenesis of 30S subunits. This is Probable ribosomal RNA small subunit methyltransferase A from Natronomonas pharaonis (strain ATCC 35678 / DSM 2160 / CIP 103997 / JCM 8858 / NBRC 14720 / NCIMB 2260 / Gabara) (Halobacterium pharaonis).